The chain runs to 449 residues: Phosphoglucosamine mutase (449 aa).

Serine 100 functions as the Phosphoserine intermediate in the catalytic mechanism. Mg(2+) is bound by residues serine 100, aspartate 241, aspartate 243, and aspartate 245. The residue at position 100 (serine 100) is a Phosphoserine.

The protein belongs to the phosphohexose mutase family. Requires Mg(2+) as cofactor. In terms of processing, activated by phosphorylation.

The enzyme catalyses alpha-D-glucosamine 1-phosphate = D-glucosamine 6-phosphate. Catalyzes the conversion of glucosamine-6-phosphate to glucosamine-1-phosphate. The protein is Phosphoglucosamine mutase of Geobacillus kaustophilus (strain HTA426).